The following is a 270-amino-acid chain: Putative phosphoenolpyruvate synthase regulatory protein (270 aa).

Residue G149–T156 participates in ADP binding.

The protein belongs to the pyruvate, phosphate/water dikinase regulatory protein family. PSRP subfamily.

The enzyme catalyses [pyruvate, water dikinase] + ADP = [pyruvate, water dikinase]-phosphate + AMP + H(+). The catalysed reaction is [pyruvate, water dikinase]-phosphate + phosphate + H(+) = [pyruvate, water dikinase] + diphosphate. Bifunctional serine/threonine kinase and phosphorylase involved in the regulation of the phosphoenolpyruvate synthase (PEPS) by catalyzing its phosphorylation/dephosphorylation. The sequence is that of Putative phosphoenolpyruvate synthase regulatory protein from Pseudoalteromonas atlantica (strain T6c / ATCC BAA-1087).